The primary structure comprises 631 residues: Anthrax toxin receptor-like (631 aa).

Residues Met-1–Ala-27 form the signal peptide. The Extracellular portion of the chain corresponds to Gly-28–Asn-353. Residues Asp-76–Leu-246 enclose the VWFA domain. The a divalent metal cation site is built by Ser-84, Ser-86, and Thr-150. The chain crosses the membrane as a helical span at residues Trp-354–Leu-374. Residues Cys-375 to Phe-631 lie on the Cytoplasmic side of the membrane. The tract at residues Glu-382–Pro-413 is disordered. Positions Lys-388 to Lys-397 are enriched in basic and acidic residues. Over residues Pro-398–Pro-413 the composition is skewed to pro residues.

This sequence belongs to the ATR family.

The protein localises to the membrane. The sequence is that of Anthrax toxin receptor-like (ANTXRL) from Homo sapiens (Human).